The following is an 855-amino-acid chain: MGSDRARKGGGGPKDFGAGLKYNSRHEKVNGLEEGVEFLPVNNVKKVEKHGPGRWVVLAAVLIGLLLVLLGIGFLVWHLQYRDVRVQKVFNGYMRITNENFVDAYENSNSTEFVSLASKVKDALKLLYSGVPFLGPYHKESAVTAFSEGSVIAYYWSEFSIPQHLVEEAERVMAEERVVMLPPRARSLKSFVVTSVVAFPTDSKTVQRTQDNSCSFGLHARGVELMRFTTPGFPDSPYPAHARCQWALRGDADSVLSLTFRSFDLASCDERGSDLVTVYNTLSPMEPHALVQLCGTYPPSYNLTFHSSQNVLLITLITNTERRHPGFEATFFQLPRMSSCGGRLRKAQGTFNSPYYPGHYPPNIDCTWNIEVPNNQHVKVRFKFFYLLEPGVPAGTCPKDYVEINGEKYCGERSQFVVTSNSNKITVRFHSDQSYTDTGFLAEYLSYDSSDPCPGQFTCRTGRCIRKELRCDGWADCTDHSDELNCSCDAGHQFTCKNKFCKPLFWVCDSVNDCGDNSDEQGCSCPAQTFRCSNGKCLSKSQQCNGKDDCGDGSDEASCPKVNVVTCTKHTYRCLNGLCLSKGNPECDGKEDCSDGSDEKDCDCGLRSFTRQARVVGGTDADEGEWPWQVSLHALGQGHICGASLISPNWLVSAAHCYIDDRGFRYSDPTQWTAFLGLHDQSQRSAPGVQERRLKRIISHPFFNDFTFDYDIALLELEKPAEYSSMVRPICLPDASHVFPAGKAIWVTGWGHTQYGGTGALILQKGEIRVINQTTCENLLPQQITPRMMCVGFLSGGVDSCQGDSGGPLSSVEADGRIFQAGVVSWGDGCAQRNKPGVYTRLPLFRDWIKENTGV.

The segment at 1-20 (MGSDRARKGGGGPKDFGAGL) is disordered. Topologically, residues 1 to 55 (MGSDRARKGGGGPKDFGAGLKYNSRHEKVNGLEEGVEFLPVNNVKKVEKHGPGRW) are cytoplasmic. A helical; Signal-anchor for type II membrane protein membrane pass occupies residues 56–76 (VVLAAVLIGLLLVLLGIGFLV). Over 77 to 855 (WHLQYRDVRV…RDWIKENTGV (779 aa)) the chain is Extracellular. The SEA domain occupies 86-203 (VQKVFNGYMR…TSVVAFPTDS (118 aa)). N-linked (GlcNAc...) asparagine glycosylation is present at Asn-109. Cys-214 and Cys-244 form a disulfide bridge. 2 CUB domains span residues 214–334 (CSFG…FFQL) and 340–447 (CGGR…YLSY). Asn-302 carries N-linked (GlcNAc...) asparagine glycosylation. Disulfide bonds link Cys-340–Cys-366, Cys-397–Cys-410, Cys-453–Cys-464, Cys-459–Cys-477, Cys-471–Cys-486, Cys-488–Cys-501, Cys-496–Cys-514, Cys-508–Cys-523, Cys-525–Cys-537, Cys-532–Cys-550, Cys-544–Cys-559, Cys-567–Cys-579, Cys-574–Cys-593, Cys-587–Cys-602, and Cys-641–Cys-657. 4 LDL-receptor class A domains span residues 452 to 487 (PCPGQFTCRTGRCIRKELRCDGWADCTDHSDELNCS), 487 to 524 (SCDAGHQFTCKNKFCKPLFWVCDSVNDCGDNSDEQGCS), 524 to 560 (SCPAQTFRCSNGKCLSKSQQCNGKDDCGDGSDEASCP), and 566 to 603 (TCTKHTYRCLNGLCLSKGNPECDGKEDCSDGSDEKDCD). Residue Asn-485 is glycosylated (N-linked (GlcNAc...) asparagine). The Peptidase S1 domain maps to 615-854 (VVGGTDADEG…FRDWIKENTG (240 aa)). Catalysis depends on charge relay system residues His-656 and Asp-711. A glycan (N-linked (GlcNAc...) asparagine) is linked at Asn-772. Intrachain disulfides connect Cys-776–Cys-790 and Cys-801–Cys-830. Ser-805 serves as the catalytic Charge relay system.

It belongs to the peptidase S1 family. Interacts with CDCP1. May interact with TMEFF1. Interacts with iripin-3, a serine protease inhibitor from Ixodes ricinus saliva. Interacts with iripin-1, a serine protease inhibitor from Ixodes ricinus saliva.

It is found in the membrane. It catalyses the reaction Cleaves various synthetic substrates with Arg or Lys at the P1 position and prefers small side-chain amino acids, such as Ala and Gly, at the P2 position.. Functionally, exhibits trypsin-like activity as defined by cleavage of synthetic substrates with Arg or Lys as the P1 site. Involved in the terminal differentiation of keratinocytes through prostasin (PRSS8) activation and filaggrin (FLG) processing. Proteolytically cleaves and therefore activates TMPRSS13. This chain is Suppressor of tumorigenicity 14 protein (ST14), found in Homo sapiens (Human).